The primary structure comprises 309 residues: MPIRVPDELPAVNFLREENVFVMTTSRASGQEIRPLKVLILNLMPKKIETENQFLRLLSNSPLQVDIQLLRIDSRESRNTPAEHLNNFYCNFEDIQEQNFDGLIVTGAPLGLVEFNDVAYWPQIKQVLEWSKDHVTSTLFVCWAVQAALNILYGIPKQTRTDKLSGVYEHHILHPHALLTRGFDDSFLAPHSRYADFPAALIRDYTDLEILAETEEGDAYLFASKDKRIAFVTGHPEYDAQTLAQEYFRDVEAGLGPEVPYNYFPHNDPQNTPRASWRSHGNLLFTNWLNYYVYQITPYDLRHMNPTLD.

Residue Cys142 is the Acyl-thioester intermediate of the active site. Substrate contacts are provided by Lys163 and Ser192. His235 serves as the catalytic Proton acceptor. The active site involves Glu237. Arg249 provides a ligand contact to substrate.

It belongs to the MetA family. Homodimer.

The protein localises to the cytoplasm. The enzyme catalyses L-homoserine + succinyl-CoA = O-succinyl-L-homoserine + CoA. Its pathway is amino-acid biosynthesis; L-methionine biosynthesis via de novo pathway; O-succinyl-L-homoserine from L-homoserine: step 1/1. Its function is as follows. Transfers a succinyl group from succinyl-CoA to L-homoserine, forming succinyl-L-homoserine. This is Homoserine O-succinyltransferase from Escherichia coli O139:H28 (strain E24377A / ETEC).